We begin with the raw amino-acid sequence, 348 residues long: Putative olfactory receptor 3A4 (348 aa).

Over 1 to 28 (MDLGNSGNDSVVTKFVLLGLTETAALQP) the chain is Extracellular. N8 is a glycosylation site (N-linked (GlcNAc...) asparagine). A helical membrane pass occupies residues 29 to 52 (ILFVIFLLAYVTTIGGTLSILAAI). Residues 53–60 (LMETKLHS) lie on the Cytoplasmic side of the membrane. Residues 61-82 (PMYFFLGNLSLPDVGCVSVTVP) form a helical membrane-spanning segment. Residues 83–103 (AMLSHFISNDRSIPYKACLSE) lie on the Extracellular side of the membrane. A disulfide bridge links C100 with C192. A helical membrane pass occupies residues 104 to 123 (LFFFHLLAGADCFLLTIMAY). The Cytoplasmic segment spans residues 124 to 143 (DRYLAICQSLTYSSRMSWGI). A helical membrane pass occupies residues 144–161 (QQALVGMSCVFSFTNALT). Residues 162 to 199 (QTVALSPLNFCGPNVINHFYCDLPQPFQLSCSSVHLNG) lie on the Extracellular side of the membrane. The chain crosses the membrane as a helical span at residues 200–222 (QLLFVAAAFMGVAPLVLITVSYA). Topologically, residues 223-239 (HVAAAVLRIRSAEGRKK) are cytoplasmic. Residues 240-262 (AFSTCSSHLTVVGIFYGTGVFSY) traverse the membrane as a helical segment. The Extracellular segment spans residues 263-275 (TRLGSVESSDKDK). A helical transmembrane segment spans residues 276–295 (GIGILNTVISPMLNPLIYWT). Residues 296–348 (SLLDVGCISHCSSDAGVSPGPPVQSSLCCLQFTALLSPPPGWGGLSPLNSHGL) lie on the Cytoplasmic side of the membrane.

It belongs to the G-protein coupled receptor 1 family.

The protein resides in the cell membrane. Odorant receptor. The protein is Putative olfactory receptor 3A4 (OR3A4P) of Homo sapiens (Human).